The chain runs to 682 residues: Glutamine--fructose-6-phosphate aminotransferase [isomerizing] 2 (682 aa).

Cys-2 functions as the For GATase activity in the catalytic mechanism. The 287-residue stretch at 2 to 288 (CGIFAYMNYR…DDDIAAVADG (287 aa)) folds into the Glutamine amidotransferase type-2 domain. Ser-244 bears the Phosphoserine mark. SIS domains are found at residues 360–499 (HLKE…DRIS) and 531–672 (LALE…VDFP). Substrate-binding positions include 377-378 (TS), 422-424 (SQS), Thr-427, and His-578.

As to expression, highest levels of expression in heart, placenta, and spinal cord.

The enzyme catalyses D-fructose 6-phosphate + L-glutamine = D-glucosamine 6-phosphate + L-glutamate. It functions in the pathway nucleotide-sugar biosynthesis; UDP-N-acetyl-alpha-D-glucosamine biosynthesis; alpha-D-glucosamine 6-phosphate from D-fructose 6-phosphate: step 1/1. Its function is as follows. Controls the flux of glucose into the hexosamine pathway. Most likely involved in regulating the availability of precursors for N- and O-linked glycosylation of proteins. The polypeptide is Glutamine--fructose-6-phosphate aminotransferase [isomerizing] 2 (GFPT2) (Homo sapiens (Human)).